We begin with the raw amino-acid sequence, 334 residues long: Holliday junction branch migration complex subunit RuvB (334 aa).

The large ATPase domain (RuvB-L) stretch occupies residues 4-184 (ADRIISASPQ…FGIVQRLEFY (181 aa)). Residues Ile-23, Arg-24, Gly-65, Lys-68, Thr-69, Thr-70, 131-133 (EDY), Arg-174, Tyr-184, and Arg-221 contribute to the ATP site. Thr-69 is a Mg(2+) binding site. Residues 185–255 (NVDDLTSIVK…IAKQALVMLD (71 aa)) form a small ATPAse domain (RuvB-S) region. The interval 258-334 (PQGFDFMDIK…YAHLGISLSE (77 aa)) is head domain (RuvB-H). DNA contacts are provided by Arg-294, Arg-313, and Arg-318.

This sequence belongs to the RuvB family. In terms of assembly, homohexamer. Forms an RuvA(8)-RuvB(12)-Holliday junction (HJ) complex. HJ DNA is sandwiched between 2 RuvA tetramers; dsDNA enters through RuvA and exits via RuvB. An RuvB hexamer assembles on each DNA strand where it exits the tetramer. Each RuvB hexamer is contacted by two RuvA subunits (via domain III) on 2 adjacent RuvB subunits; this complex drives branch migration. In the full resolvosome a probable DNA-RuvA(4)-RuvB(12)-RuvC(2) complex forms which resolves the HJ.

It localises to the cytoplasm. It catalyses the reaction ATP + H2O = ADP + phosphate + H(+). In terms of biological role, the RuvA-RuvB-RuvC complex processes Holliday junction (HJ) DNA during genetic recombination and DNA repair, while the RuvA-RuvB complex plays an important role in the rescue of blocked DNA replication forks via replication fork reversal (RFR). RuvA specifically binds to HJ cruciform DNA, conferring on it an open structure. The RuvB hexamer acts as an ATP-dependent pump, pulling dsDNA into and through the RuvAB complex. RuvB forms 2 homohexamers on either side of HJ DNA bound by 1 or 2 RuvA tetramers; 4 subunits per hexamer contact DNA at a time. Coordinated motions by a converter formed by DNA-disengaged RuvB subunits stimulates ATP hydrolysis and nucleotide exchange. Immobilization of the converter enables RuvB to convert the ATP-contained energy into a lever motion, pulling 2 nucleotides of DNA out of the RuvA tetramer per ATP hydrolyzed, thus driving DNA branch migration. The RuvB motors rotate together with the DNA substrate, which together with the progressing nucleotide cycle form the mechanistic basis for DNA recombination by continuous HJ branch migration. Branch migration allows RuvC to scan DNA until it finds its consensus sequence, where it cleaves and resolves cruciform DNA. In Haemophilus ducreyi (strain 35000HP / ATCC 700724), this protein is Holliday junction branch migration complex subunit RuvB.